The sequence spans 270 residues: GTP cyclohydrolase FolE2 2 (270 aa).

This sequence belongs to the GTP cyclohydrolase IV family.

It carries out the reaction GTP + H2O = 7,8-dihydroneopterin 3'-triphosphate + formate + H(+). It functions in the pathway cofactor biosynthesis; 7,8-dihydroneopterin triphosphate biosynthesis; 7,8-dihydroneopterin triphosphate from GTP: step 1/1. Functionally, converts GTP to 7,8-dihydroneopterin triphosphate. The sequence is that of GTP cyclohydrolase FolE2 2 from Dechloromonas aromatica (strain RCB).